The chain runs to 586 residues: uncharacterized protein (586 aa).

An ABC transmembrane type-1 domain is found at 29–312 (YGIAIGSMVV…LARMRISLES (284 aa)). Helical transmembrane passes span 30–50 (GIAI…AWIM), 66–86 (VFGV…ATYV), 162–184 (MVIQ…ILGV), and 256–276 (IMET…GVLV). Positions 346–580 (IRFKDVNFSY…DGVYRRLYEL (235 aa)) constitute an ABC transporter domain. Residue 379 to 386 (GPSGAGKS) participates in ATP binding.

This sequence belongs to the ABC transporter superfamily.

The protein resides in the cell membrane. This is an uncharacterized protein from Sinorhizobium fredii (strain NBRC 101917 / NGR234).